The chain runs to 175 residues: uncharacterized protein (175 aa).

Residues 71–166 form a DNL-type zinc finger; the sequence is QPKPTYNVSF…KPPQFKIRPA (96 aa). Zn(2+)-binding residues include C82, C85, C107, and C110.

This is an uncharacterized protein from Schizosaccharomyces pombe (strain 972 / ATCC 24843) (Fission yeast).